A 656-amino-acid polypeptide reads, in one-letter code: Putative cysteine-rich receptor-like protein kinase 32 (656 aa).

The N-terminal stretch at 1 to 23 (MCLQNLLSILCFVLAISFGYVSA) is a signal peptide. Gnk2-homologous domains are found at residues 24–126 (QKCV…NSSF) and 134–238 (PTMV…GSEY). The Extracellular portion of the chain corresponds to 24–262 (QKCVDSMFFR…PDGKTISTGA (239 aa)). N-linked (GlcNAc...) asparagine glycans are attached at residues Asn-35, Asn-52, Asn-61, Asn-103, and Asn-123. The chain crosses the membrane as a helical span at residues 263–283 (IVAVVVSVVIFVVLLALVLVI). Over 284-656 (RKRRQSYKTL…SASITRVTPR (373 aa)) the chain is Cytoplasmic. Residues 321 to 606 (FSRNNKLGKG…IFQMLTNSSI (286 aa)) enclose the Protein kinase domain. ATP is bound by residues 327–335 (LGKGGFGEV) and Lys-349. Tyr-394 carries the post-translational modification Phosphotyrosine. The active-site Proton acceptor is the Asp-454. Ser-458 is subject to Phosphoserine. Thr-494 is modified (phosphothreonine). Tyr-502 is subject to Phosphotyrosine.

It belongs to the protein kinase superfamily. Ser/Thr protein kinase family. CRK subfamily.

The protein localises to the membrane. It catalyses the reaction L-seryl-[protein] + ATP = O-phospho-L-seryl-[protein] + ADP + H(+). The enzyme catalyses L-threonyl-[protein] + ATP = O-phospho-L-threonyl-[protein] + ADP + H(+). The polypeptide is Putative cysteine-rich receptor-like protein kinase 32 (CRK32) (Arabidopsis thaliana (Mouse-ear cress)).